Reading from the N-terminus, the 413-residue chain is Multifunctional CCA protein (413 aa).

ATP is bound by residues Gly8 and Arg11. CTP-binding residues include Gly8 and Arg11. Asp21 and Asp23 together coordinate Mg(2+). ATP-binding residues include Arg91, Arg137, and Arg140. CTP-binding residues include Arg91, Arg137, and Arg140. The 102-residue stretch at 228–329 (TGLHTLMTVT…VKLFDSIDAW (102 aa)) folds into the HD domain.

This sequence belongs to the tRNA nucleotidyltransferase/poly(A) polymerase family. Bacterial CCA-adding enzyme type 1 subfamily. As to quaternary structure, monomer. Can also form homodimers and oligomers. Mg(2+) is required as a cofactor. It depends on Ni(2+) as a cofactor.

The catalysed reaction is a tRNA precursor + 2 CTP + ATP = a tRNA with a 3' CCA end + 3 diphosphate. It carries out the reaction a tRNA with a 3' CCA end + 2 CTP + ATP = a tRNA with a 3' CCACCA end + 3 diphosphate. Functionally, catalyzes the addition and repair of the essential 3'-terminal CCA sequence in tRNAs without using a nucleic acid template. Adds these three nucleotides in the order of C, C, and A to the tRNA nucleotide-73, using CTP and ATP as substrates and producing inorganic pyrophosphate. tRNA 3'-terminal CCA addition is required both for tRNA processing and repair. Also involved in tRNA surveillance by mediating tandem CCA addition to generate a CCACCA at the 3' terminus of unstable tRNAs. While stable tRNAs receive only 3'-terminal CCA, unstable tRNAs are marked with CCACCA and rapidly degraded. This chain is Multifunctional CCA protein, found in Klebsiella pneumoniae subsp. pneumoniae (strain ATCC 700721 / MGH 78578).